Here is a 370-residue protein sequence, read N- to C-terminus: 3-dehydroquinate synthase (370 aa).

NAD(+)-binding positions include G112 to D116, T136 to S137, K149, K158, and T176 to T179. Zn(2+) contacts are provided by E191, H254, and H276.

Belongs to the sugar phosphate cyclases superfamily. Dehydroquinate synthase family. Co(2+) is required as a cofactor. Requires Zn(2+) as cofactor. It depends on NAD(+) as a cofactor.

The protein localises to the cytoplasm. The enzyme catalyses 7-phospho-2-dehydro-3-deoxy-D-arabino-heptonate = 3-dehydroquinate + phosphate. It participates in metabolic intermediate biosynthesis; chorismate biosynthesis; chorismate from D-erythrose 4-phosphate and phosphoenolpyruvate: step 2/7. Functionally, catalyzes the conversion of 3-deoxy-D-arabino-heptulosonate 7-phosphate (DAHP) to dehydroquinate (DHQ). This is 3-dehydroquinate synthase from Xanthomonas oryzae pv. oryzae (strain PXO99A).